A 613-amino-acid chain; its full sequence is Proline--tRNA ligase (613 aa).

It belongs to the class-II aminoacyl-tRNA synthetase family. ProS type 1 subfamily. As to quaternary structure, homodimer.

The protein resides in the cytoplasm. It catalyses the reaction tRNA(Pro) + L-proline + ATP = L-prolyl-tRNA(Pro) + AMP + diphosphate. In terms of biological role, catalyzes the attachment of proline to tRNA(Pro) in a two-step reaction: proline is first activated by ATP to form Pro-AMP and then transferred to the acceptor end of tRNA(Pro). As ProRS can inadvertently accommodate and process non-cognate amino acids such as alanine and cysteine, to avoid such errors it has two additional distinct editing activities against alanine. One activity is designated as 'pretransfer' editing and involves the tRNA(Pro)-independent hydrolysis of activated Ala-AMP. The other activity is designated 'posttransfer' editing and involves deacylation of mischarged Ala-tRNA(Pro). The misacylated Cys-tRNA(Pro) is not edited by ProRS. This chain is Proline--tRNA ligase, found in Tropheryma whipplei (strain Twist) (Whipple's bacillus).